The sequence spans 304 residues: MDSVSKISRKINLFTKHIGTYSKINTSTTYYATVKLLVNNPCNIDQDTIFNLLEYSVIILDLDGFYQIIKHHNDIFRDNYRLIRYILYIAYQNHHQDCSVYYEMIKYLIDYGLDITFNDNFAIKLASLCHENILKLVIDNGGDVHADNEFPICLAANHGRLSCVKLLVDCGVDPFCFDNIVIKLASIDYYDNVVEYMVSIGADINAGNNYVLRYAIKNLDKKMIELAINAGASINDISPNDITHIIKYQSPTIMNILVEYGLDISTVNFCSKIRPERKKFVDNLISRGVDPTIIAYLSYACESD.

6 ANK repeats span residues 82 to 117 (LIRY…DITF), 118 to 146 (NDNF…DVHA), 147 to 176 (DNEF…DPFC), 178 to 206 (DNIV…DINA), 207 to 236 (GNNY…SIND), and 238 to 266 (SPND…DIST).

The polypeptide is Putative ankyrin repeat protein R602 (Acanthamoeba polyphaga (Amoeba)).